A 191-amino-acid polypeptide reads, in one-letter code: ADP-ribosylation factor (191 aa).

G2 carries the N-myristoyl glycine lipid modification. GTP-binding positions include 24–31 (GLDAAGKT), 67–71 (DVGGQ), and 128–131 (NKQD).

Belongs to the small GTPase superfamily. Arf family.

Its subcellular location is the golgi apparatus. In terms of biological role, GTP-binding protein involved in protein trafficking; may modulate vesicle budding and uncoating within the Golgi apparatus. The protein is ADP-ribosylation factor of Giardia intestinalis (Giardia lamblia).